We begin with the raw amino-acid sequence, 460 residues long: A-type ATP synthase subunit B (460 aa).

The protein belongs to the ATPase alpha/beta chains family. Has multiple subunits with at least A(3), B(3), C, D, E, F, H, I and proteolipid K(x).

The protein resides in the cell membrane. In terms of biological role, component of the A-type ATP synthase that produces ATP from ADP in the presence of a proton gradient across the membrane. The B chain is a regulatory subunit. This is A-type ATP synthase subunit B from Methanosarcina barkeri.